Reading from the N-terminus, the 478-residue chain is ATP synthase subunit beta (478 aa).

Position 151 to 158 (G151 to T158) interacts with ATP.

The protein belongs to the ATPase alpha/beta chains family. F-type ATPases have 2 components, CF(1) - the catalytic core - and CF(0) - the membrane proton channel. CF(1) has five subunits: alpha(3), beta(3), gamma(1), delta(1), epsilon(1). CF(0) has three main subunits: a(1), b(2) and c(9-12). The alpha and beta chains form an alternating ring which encloses part of the gamma chain. CF(1) is attached to CF(0) by a central stalk formed by the gamma and epsilon chains, while a peripheral stalk is formed by the delta and b chains.

It localises to the cell inner membrane. The catalysed reaction is ATP + H2O + 4 H(+)(in) = ADP + phosphate + 5 H(+)(out). Produces ATP from ADP in the presence of a proton gradient across the membrane. The catalytic sites are hosted primarily by the beta subunits. The sequence is that of ATP synthase subunit beta from Azorhizobium caulinodans (strain ATCC 43989 / DSM 5975 / JCM 20966 / LMG 6465 / NBRC 14845 / NCIMB 13405 / ORS 571).